The chain runs to 162 residues: NADPH-dependent 7-cyano-7-deazaguanine reductase (162 aa).

Cys-53 functions as the Thioimide intermediate in the catalytic mechanism. The active-site Proton donor is the Asp-60. Residues 75-77 (VES) and 94-95 (HE) each bind substrate.

This sequence belongs to the GTP cyclohydrolase I family. QueF type 1 subfamily.

The protein localises to the cytoplasm. The enzyme catalyses 7-aminomethyl-7-carbaguanine + 2 NADP(+) = 7-cyano-7-deazaguanine + 2 NADPH + 3 H(+). Its pathway is tRNA modification; tRNA-queuosine biosynthesis. Functionally, catalyzes the NADPH-dependent reduction of 7-cyano-7-deazaguanine (preQ0) to 7-aminomethyl-7-deazaguanine (preQ1). The chain is NADPH-dependent 7-cyano-7-deazaguanine reductase from Exiguobacterium sp. (strain ATCC BAA-1283 / AT1b).